Consider the following 542-residue polypeptide: CTP synthase (542 aa).

The tract at residues 1–265 is amidoligase domain; sequence MTRFIFITGG…DTQVLKFFGM (265 aa). Ser-13 serves as a coordination point for CTP. Ser-13 is a UTP binding site. 14 to 19 contacts ATP; sequence SLGKGL. Tyr-54 serves as a coordination point for L-glutamine. Residue Asp-71 participates in ATP binding. Residues Asp-71 and Glu-139 each contribute to the Mg(2+) site. CTP is bound by residues 146 to 148, 186 to 191, and Lys-222; these read DIE and KTKPTQ. Residues 186-191 and Lys-222 contribute to the UTP site; that span reads KTKPTQ. Residues 291–541 enclose the Glutamine amidotransferase type-1 domain; sequence TIAVVGKYTS…IRAAIEQSRL (251 aa). L-glutamine is bound at residue Gly-353. The active-site Nucleophile; for glutamine hydrolysis is Cys-380. L-glutamine-binding positions include 381–384, Glu-404, and Arg-469; that span reads FGMQ. Catalysis depends on residues His-514 and Glu-516.

The protein belongs to the CTP synthase family. Homotetramer.

The enzyme catalyses UTP + L-glutamine + ATP + H2O = CTP + L-glutamate + ADP + phosphate + 2 H(+). It catalyses the reaction L-glutamine + H2O = L-glutamate + NH4(+). The catalysed reaction is UTP + NH4(+) + ATP = CTP + ADP + phosphate + 2 H(+). Its pathway is pyrimidine metabolism; CTP biosynthesis via de novo pathway; CTP from UDP: step 2/2. Its activity is regulated as follows. Allosterically activated by GTP, when glutamine is the substrate; GTP has no effect on the reaction when ammonia is the substrate. The allosteric effector GTP functions by stabilizing the protein conformation that binds the tetrahedral intermediate(s) formed during glutamine hydrolysis. Inhibited by the product CTP, via allosteric rather than competitive inhibition. Catalyzes the ATP-dependent amination of UTP to CTP with either L-glutamine or ammonia as the source of nitrogen. Regulates intracellular CTP levels through interactions with the four ribonucleotide triphosphates. This chain is CTP synthase, found in Rhodospirillum centenum (strain ATCC 51521 / SW).